A 137-amino-acid polypeptide reads, in one-letter code: MLQPKRTKFRKMHKGRNTGLAHRGSTVAFGQFGLKSVGRGRMTARQIEAARRTITRKVKRGGKIWIRVFPDKPITNKPLEVRMGKGKGPVEYWVCEIKPGKMLYEIEGVSEELAREAFTLAAAKLPFKTTIVKRTIM.

It belongs to the universal ribosomal protein uL16 family. In terms of assembly, part of the 50S ribosomal subunit.

Binds 23S rRNA and is also seen to make contacts with the A and possibly P site tRNAs. This Psychrobacter sp. (strain PRwf-1) protein is Large ribosomal subunit protein uL16.